Reading from the N-terminus, the 181-residue chain is Protein Abitram (181 aa).

The protein belongs to the ABITRAM family. Interacts with F-actin. Interacts with G-actin.

Its subcellular location is the nucleus speckle. It is found in the cell projection. It localises to the lamellipodium. The protein localises to the nucleus. The protein resides in the growth cone. Its subcellular location is the dendrite. Its function is as follows. Actin-binding protein that regulates actin polymerization, filopodia dynamics and increases the branching of proximal dendrites of developing neurons. The protein is Protein Abitram of Homo sapiens (Human).